The following is a 311-amino-acid chain: MTKLIFMGTPDFSATVLKGLLTDDRYEILAVVTQPDRAVGRKKVIQETPVKQAAKEAGLSIYQPEKLSGSPEMEDLMKLGADGIVTAAFGQFLPSKLLDSMDFAVNVHASLLPRHRGGAPIHYALIQGDEEAGVTIMEMVKEMDAGDMISRRSIPITDEDNVGTLFEKLALVGRDLLLDTLPAYIAGDIKPEPQDTSQVTFSPNIKSEEEKLNWNKTNRQLFNQIRGMNPWPVAHTFLKGDRFKIYEALPVEGQGNPGEILSIGKKELIVATAEGALSLKQVQPAGKPKMDIASFLNGVGRTLTVGERFGD.

110 to 113 contributes to the (6S)-5,6,7,8-tetrahydrofolate binding site; the sequence is SLLP.

Belongs to the Fmt family.

It catalyses the reaction L-methionyl-tRNA(fMet) + (6R)-10-formyltetrahydrofolate = N-formyl-L-methionyl-tRNA(fMet) + (6S)-5,6,7,8-tetrahydrofolate + H(+). In terms of biological role, attaches a formyl group to the free amino group of methionyl-tRNA(fMet). The formyl group appears to play a dual role in the initiator identity of N-formylmethionyl-tRNA by promoting its recognition by IF2 and preventing the misappropriation of this tRNA by the elongation apparatus. The protein is Methionyl-tRNA formyltransferase of Streptococcus pneumoniae serotype 2 (strain D39 / NCTC 7466).